Here is a 44-residue protein sequence, read N- to C-terminus: uncharacterized protein (44 aa).

The helical transmembrane segment at Ser-6–Val-26 threads the bilayer.

Its subcellular location is the membrane. This is an uncharacterized protein from Ornithodoros (relapsing fever ticks).